A 211-amino-acid chain; its full sequence is MRLRKKWWARPEMEASPLCIVNPKDYKGKWREEFKNDNEIYLELGCGRGDFVTNIANKHPEKNYVAIDLKDEVIAIALRKITESEVQNVRIAPLQIAFINEVFDKDEIARIYINFCNPWPKDRHKKRRLTHTKFLTKYKEFLKPNSQIWFKTDDDGLFVESLDYFKECGFQIKFMTYDLHKSGFDKNIVTEYESKFLKLGINIKFLIAELK.

Positions 43, 68, and 117 each coordinate S-adenosyl-L-methionine. Residues Lys-121, Asp-153, and 190–193 (TEYE) each bind substrate.

Belongs to the class I-like SAM-binding methyltransferase superfamily. TrmB family.

It carries out the reaction guanosine(46) in tRNA + S-adenosyl-L-methionine = N(7)-methylguanosine(46) in tRNA + S-adenosyl-L-homocysteine. It participates in tRNA modification; N(7)-methylguanine-tRNA biosynthesis. In terms of biological role, catalyzes the formation of N(7)-methylguanine at position 46 (m7G46) in tRNA. The sequence is that of tRNA (guanine-N(7)-)-methyltransferase from Clostridium acetobutylicum (strain ATCC 824 / DSM 792 / JCM 1419 / IAM 19013 / LMG 5710 / NBRC 13948 / NRRL B-527 / VKM B-1787 / 2291 / W).